The primary structure comprises 443 residues: 3-phosphoshikimate 1-carboxyvinyltransferase (443 aa).

Residues K25, S26, and R30 each coordinate 3-phosphoshikimate. A phosphoenolpyruvate-binding site is contributed by K25. Residues G117 and R145 each contribute to the phosphoenolpyruvate site. 3-phosphoshikimate contacts are provided by S188, S189, Q190, S217, E331, and H358. Q190 is a phosphoenolpyruvate binding site. The active-site Proton acceptor is E331. Residues R362, R404, and K428 each coordinate phosphoenolpyruvate.

This sequence belongs to the EPSP synthase family. Monomer.

It localises to the cytoplasm. The catalysed reaction is 3-phosphoshikimate + phosphoenolpyruvate = 5-O-(1-carboxyvinyl)-3-phosphoshikimate + phosphate. Its pathway is metabolic intermediate biosynthesis; chorismate biosynthesis; chorismate from D-erythrose 4-phosphate and phosphoenolpyruvate: step 6/7. In terms of biological role, catalyzes the transfer of the enolpyruvyl moiety of phosphoenolpyruvate (PEP) to the 5-hydroxyl of shikimate-3-phosphate (S3P) to produce enolpyruvyl shikimate-3-phosphate and inorganic phosphate. The sequence is that of 3-phosphoshikimate 1-carboxyvinyltransferase from Tropheryma whipplei (strain TW08/27) (Whipple's bacillus).